The chain runs to 256 residues: 3-deoxy-manno-octulosonate cytidylyltransferase (256 aa).

It belongs to the KdsB family.

It is found in the cytoplasm. It catalyses the reaction 3-deoxy-alpha-D-manno-oct-2-ulosonate + CTP = CMP-3-deoxy-beta-D-manno-octulosonate + diphosphate. It participates in nucleotide-sugar biosynthesis; CMP-3-deoxy-D-manno-octulosonate biosynthesis; CMP-3-deoxy-D-manno-octulosonate from 3-deoxy-D-manno-octulosonate and CTP: step 1/1. The protein operates within bacterial outer membrane biogenesis; lipopolysaccharide biosynthesis. Functionally, activates KDO (a required 8-carbon sugar) for incorporation into bacterial lipopolysaccharide in Gram-negative bacteria. The chain is 3-deoxy-manno-octulosonate cytidylyltransferase from Histophilus somni (strain 129Pt) (Haemophilus somnus).